Consider the following 742-residue polypeptide: MAKKDSVLEAGWSVMEAGVAKLQKILEEVPDEPPFDPVQRMQLYTTVHNLCTQKPPNDYSQQIYDRYGGVYVDYNKQTVLPAIREKHGEYMLRELVKRWANQKILVRWLSHFFEYLDRFYTRRGSHPTLSAVGFISFRDLVYQELQSKAKDAVLALIHKEREGEQIDRALLKNVIDVYCGNGMGELVKYEEDFESFLLEDSASYYSRNASRWNQENSCPDYMIKAEESLRLEKERVTNYLHSTTEPKLVAKVQNELLVVVAKQLIENEHSGCRALLRDDKMDDLARMYRLYHPIPQGLDPVADLFKQHITVEGSALIKQATEAATDKAASTSGLKVQDQVLIRQLIDLHDKFMVYVDECFQKHSLFHKALKEAFEVFCNKTVAGVSSAEILATYCDNILKTGGGIEKLENEDLELTLEKVVKLLVYISDKDLFAEFFRKKQARRLLFDRNGNDYHERSLLTKFKELLGAQFTSKMEGMLTDMTLAKEHQTNFVEFLSVNKTKKLGMDFTVTVLTTGFWPSYKTTDLNLPIEMVNCVEAFKAYYGTKTNSRRLSWIYSLGTCQLAGKFDKKTIEIVVTTYQAAVLLLFNNTERLSYTEILEQLNLGHEDLARLLHSLSCLKYKILIKEPMSRNISNTDTFEFNSKFTDKMRRIRVPLPPMDERKKIVEDVDKDRRYAIDAALVRIMKSRKVLGHQQLVSECVEHLSKMFKPDIKMIKKRIEDLISRDYLERDTDNPNTFKYLA.

One can recognise a Cullin neddylation domain in the interval 672 to 734 (DRRYAIDAAL…RDYLERDTDN (63 aa)). Residue Lys686 forms a Glycyl lysine isopeptide (Lys-Gly) (interchain with G-Cter in NEDD8) linkage.

The protein belongs to the cullin family. In terms of assembly, interacts with SKIP17 and FBW2/SKIP18. Neddylated; which enhances the ubiquitination activity of E3 ubiquitin-protein ligase complexes.

In terms of biological role, core component of multiple SCF (SKP1-CUL1-F-box protein) E3 ubiquitin-protein ligase complexes. Involved in ubiquitination and subsequent proteasomal degradation of target proteins. The protein is Cullin-2 (CUL2) of Arabidopsis thaliana (Mouse-ear cress).